Consider the following 803-residue polypeptide: MADMSVKQLADLVRTTPERLLEQLKEAGVAITHVDQTISDEEKRKLLLHLKTSHSTETGKKRSKIVLKRKKLSVVKSGKKSVNVEIRSKRTYTKPVVEQKRETEPAPTQEVPLTSDTTNLNEKAEVNVATLEKAVEAEVKEEAKKTPSEKKETPKKGPRKETRRSRKPDKEDKWEREELHMTKLVEERRRRHKPAHMPDSDNASAKLEQGFARPTAPVVREVALPESITVADLAQKMSVKAAEVIKAMMKLGAMVTINQRIDQETAAIVVEEMGHKPKLIKEDVLEENLVATLGEQTGEAVPRAPVVTIMGHVDHGKTSLLDYIRRTKVTSTEAGGITQHIGAYHVETELGMITFLDTPGHEAFTAMRARGAKCTDIVVLVVAADDGVMPQTVEAIQHARAAKVPVVVAVNKIDKPEADPERIKTELSTHDVLPEEWGGDTMFQPISAKTGEGIDALLERILLQAEVLELKAVDNGPARGMVVESRLDRGRGPVATVLVTSGELHLGDILLVGREYGRVRAMIGDDGRPCESAGPSMPVEVLGLSGTPVAGEEAIVVPDERKAREIARFRQGKYREVRLAKKQTAHLERIFDRMGEGKQNTLNIVLKADVQGSLEALTEALNKLSTDEVKVNIIASGVGGITESDVNLAIASDAVVIGFNVRADAPTRVLVEREGVDLRYYSIIYDLIDEVKKALSGLLAPEFEEKIVGLAEVRDVFRSSKIGAIAGCMVVEGVVRRHLPIRVLRDNVVIYEGQLESLRRYKEDVAEVRQGTECGIGVKNYNDVKVGDQIEVYEKTQVHRTIA.

Disordered regions lie at residues 95–125 (PVVE…EKAE) and 138–178 (EVKE…EREE). Polar residues predominate over residues 111-121 (VPLTSDTTNLN). Residues 138–155 (EVKEEAKKTPSEKKETPK) are compositionally biased toward basic and acidic residues. Residues 156 to 167 (KGPRKETRRSRK) are compositionally biased toward basic residues. Basic and acidic residues predominate over residues 168–178 (PDKEDKWEREE). A tr-type G domain is found at 302–471 (PRAPVVTIMG…LLQAEVLELK (170 aa)). Positions 311 to 318 (GHVDHGKT) are G1. 311-318 (GHVDHGKT) is a binding site for GTP. A G2 region spans residues 336 to 340 (GITQH). The segment at 357-360 (DTPG) is G3. GTP is bound by residues 357-361 (DTPGH) and 411-414 (NKID). The interval 411-414 (NKID) is G4. The interval 447–449 (SAK) is G5.

This sequence belongs to the TRAFAC class translation factor GTPase superfamily. Classic translation factor GTPase family. IF-2 subfamily.

The protein localises to the cytoplasm. Functionally, one of the essential components for the initiation of protein synthesis. Protects formylmethionyl-tRNA from spontaneous hydrolysis and promotes its binding to the 30S ribosomal subunits. Also involved in the hydrolysis of GTP during the formation of the 70S ribosomal complex. This Coxiella burnetii (strain CbuK_Q154) (Coxiella burnetii (strain Q154)) protein is Translation initiation factor IF-2.